Reading from the N-terminus, the 79-residue chain is DNA-directed RNA polymerase subunit omega (79 aa).

Belongs to the RNA polymerase subunit omega family. In terms of assembly, in cyanobacteria the RNAP catalytic core is composed of 2 alpha, 1 beta, 1 beta', 1 gamma and 1 omega subunit. When a sigma factor is associated with the core the holoenzyme is formed, which can initiate transcription.

It catalyses the reaction RNA(n) + a ribonucleoside 5'-triphosphate = RNA(n+1) + diphosphate. In terms of biological role, promotes RNA polymerase assembly. Latches the N- and C-terminal regions of the beta' subunit thereby facilitating its interaction with the beta and alpha subunits. This Synechococcus sp. (strain JA-2-3B'a(2-13)) (Cyanobacteria bacterium Yellowstone B-Prime) protein is DNA-directed RNA polymerase subunit omega.